We begin with the raw amino-acid sequence, 599 residues long: MSDLSHIRNFSIIAHIDHGKSTLADRFIQMCGGLSDREMEAQVLDSMDLERERGITIKAHSVTLHYKAQDGKTYQLNFIDTPGHVDFTYEVSRSLAACEGALLVVDAGQGVEAQSVANCYTAIEQGLEVMPVLNKMDLPQAEPERVKEEIESIIGIDATDAVACSAKSGMGVLEVLERLVTAIPAPEGEIEAPLQALIIDSWFDNYLGVVSLVRVKNGRVKKGDKILVKSTGKVHQVDSVGVFTPKHTETVDLKAGEVGFIIAGIKDIHGAPVGDTLTLNNTPDVEVLPGFKRVKPQVYAGLFPVSSDDFEDFRDALQKLTLNDSSLQYEPESSEALGFGFRCGFLGMLHMEIIQERLEREYDLDLITTAPTVVFEIVQKNGEIIYVDNPSKLPDLASIQEMREPICRATILVPKDHLGNVITLCIEKRGVQRDMHFLSGQVQVVYDLPMNEVVLDFFDRLKSTSRGYASLDYSFDRFEPSNLVRLDVLINGEKVDALALIVHRDNAPYKGRQLVEKMKELIPRQMFDVAIQAAIGGQIIARSTVKALRKNVLAKCYGGDVSRKRKLLEKQKAGKKRMKQVGSVEIPQEAFLAVLKVDS.

Residues 5-187 (SHIRNFSIIA…RLVTAIPAPE (183 aa)) form the tr-type G domain. Residues 17–22 (DHGKST) and 134–137 (NKMD) contribute to the GTP site.

It belongs to the TRAFAC class translation factor GTPase superfamily. Classic translation factor GTPase family. LepA subfamily.

The protein localises to the cell inner membrane. The catalysed reaction is GTP + H2O = GDP + phosphate + H(+). Required for accurate and efficient protein synthesis under certain stress conditions. May act as a fidelity factor of the translation reaction, by catalyzing a one-codon backward translocation of tRNAs on improperly translocated ribosomes. Back-translocation proceeds from a post-translocation (POST) complex to a pre-translocation (PRE) complex, thus giving elongation factor G a second chance to translocate the tRNAs correctly. Binds to ribosomes in a GTP-dependent manner. This chain is Elongation factor 4, found in Pseudomonas aeruginosa (strain LESB58).